Reading from the N-terminus, the 273-residue chain is MLSKFTAILLAVHIALFACALTQAEKRHKLTRPAFHPNAPYLAGKRIVGGFVIDISDAPYQISLQYNGKHHCGGSILNSKWILTAAHCIDLYSEVKPTVRVGSSEHAAGGTVLHLLRIVPHPGHSSGGNNYDIALLELECELTFNDNVQPVQLPEQDDPIDEGTMGIVSGWGMTMSAADLNAILRATNVPTVNQQECNQAYQSYGGVAEQMFCAGYKQGGTGTCRNDSGGPFVAEGKLIGVVSWSHECALAGYPGVYARVASVRDWIRETSGV.

An N-terminal signal peptide occupies residues 1 to 22; the sequence is MLSKFTAILLAVHIALFACALT. Positions 23-46 are cleaved as a propeptide — activation peptide; that stretch reads QAEKRHKLTRPAFHPNAPYLAGKR. The 226-residue stretch at 47–272 folds into the Peptidase S1 domain; it reads IVGGFVIDIS…VRDWIRETSG (226 aa). Cysteine 72 and cysteine 88 are joined by a disulfide. Residues histidine 87 and aspartate 132 each act as charge relay system in the active site. Cystine bridges form between cysteine 197–cysteine 213 and cysteine 224–cysteine 248. Serine 228 serves as the catalytic Charge relay system.

It belongs to the peptidase S1 family. As to expression, expressed in the midgut. Expression levels drop a few hours after blood feeding and pick up again 28 hours later.

Its subcellular location is the secreted. It catalyses the reaction Preferential cleavage: Arg-|-Xaa, Lys-|-Xaa.. In terms of biological role, constitutive trypsin that is expressed 2 days after emergence, coinciding with host seeking behavior of the female. This Anopheles gambiae (African malaria mosquito) protein is Trypsin-6 (TRYP6).